The sequence spans 237 residues: Phosphoribosylaminoimidazole-succinocarboxamide synthase (237 aa).

The protein belongs to the SAICAR synthetase family.

It carries out the reaction 5-amino-1-(5-phospho-D-ribosyl)imidazole-4-carboxylate + L-aspartate + ATP = (2S)-2-[5-amino-1-(5-phospho-beta-D-ribosyl)imidazole-4-carboxamido]succinate + ADP + phosphate + 2 H(+). Its pathway is purine metabolism; IMP biosynthesis via de novo pathway; 5-amino-1-(5-phospho-D-ribosyl)imidazole-4-carboxamide from 5-amino-1-(5-phospho-D-ribosyl)imidazole-4-carboxylate: step 1/2. This chain is Phosphoribosylaminoimidazole-succinocarboxamide synthase, found in Shigella boydii serotype 4 (strain Sb227).